The sequence spans 193 residues: uncharacterized protein (193 aa).

This is an uncharacterized protein from Acidianus convivator (ATV).